Reading from the N-terminus, the 130-residue chain is Blasticidin-S deaminase (130 aa).

Residues 1–129 (MPLSQEESTL…ELLPSGYMNR (129 aa)) form the CMP/dCMP-type deaminase domain. Residue Ser28 coordinates substrate. Zn(2+) is bound at residue Cys54. Residue Glu56 is the Proton donor of the active site. Position 82 (Arg82) interacts with substrate. Residues Cys88 and Cys91 each coordinate Zn(2+). Tyr126 provides a ligand contact to substrate.

Belongs to the cytidine and deoxycytidylate deaminase family. Homotetramer. The cofactor is Zn(2+).

It catalyses the reaction blasticidin S + H2O + H(+) = deaminohydroxyblasticidin S + NH4(+). Catalyzes the deamination of the cytosine moiety of the antibiotics blasticidin S, cytomycin and acetylblasticidin S. The chain is Blasticidin-S deaminase (bsd) from Aspergillus terreus (strain NIH 2624 / FGSC A1156).